Here is a 536-residue protein sequence, read N- to C-terminus: Phosphoenolpyruvate carboxykinase (ATP) (536 aa).

Residues Arg-61, Tyr-195, and Lys-201 each coordinate substrate. ATP-binding positions include Lys-201, His-220, and 236–244 (GLSGTGKTT). Positions 201 and 220 each coordinate Mn(2+). A Mn(2+)-binding site is contributed by Asp-257. The ATP site is built by Glu-285, Arg-322, and Thr-447. Arg-322 serves as a coordination point for substrate.

The protein belongs to the phosphoenolpyruvate carboxykinase (ATP) family. Mn(2+) is required as a cofactor.

Its subcellular location is the cytoplasm. It carries out the reaction oxaloacetate + ATP = phosphoenolpyruvate + ADP + CO2. It functions in the pathway carbohydrate biosynthesis; gluconeogenesis. Involved in the gluconeogenesis. Catalyzes the conversion of oxaloacetate (OAA) to phosphoenolpyruvate (PEP) through direct phosphoryl transfer between the nucleoside triphosphate and OAA. This is Phosphoenolpyruvate carboxykinase (ATP) from Brucella anthropi (strain ATCC 49188 / DSM 6882 / CCUG 24695 / JCM 21032 / LMG 3331 / NBRC 15819 / NCTC 12168 / Alc 37) (Ochrobactrum anthropi).